Consider the following 285-residue polypeptide: Methionine aminopeptidase 2 (285 aa).

H114 lines the substrate pocket. The a divalent metal cation site is built by D131, D142, and H205. Substrate is bound at residue H212. E238 and E269 together coordinate a divalent metal cation.

As to quaternary structure, monomer. It depends on Co(2+) as a cofactor. Zn(2+) serves as cofactor. Mn(2+) is required as a cofactor. The cofactor is Fe(2+).

The enzyme catalyses Release of N-terminal amino acids, preferentially methionine, from peptides and arylamides.. Inhibited by bengamide derivatives and by various metalloform-selective inhibitors. Its function is as follows. Removes the N-terminal methionine from nascent proteins. The N-terminal methionine is often cleaved when the second residue in the primary sequence is small and uncharged (Met-Ala-, Cys, Gly, Pro, Ser, Thr, or Val). Requires deformylation of the N(alpha)-formylated initiator methionine before it can be hydrolyzed. The chain is Methionine aminopeptidase 2 from Mycobacterium tuberculosis (strain ATCC 25618 / H37Rv).